The primary structure comprises 98 residues: NADH-ubiquinone oxidoreductase chain 4L (98 aa).

The next 3 helical transmembrane spans lie at 1 to 21, 29 to 49, and 61 to 81; these read MSMVYINIFLAFILSLMGMLV, SLLCLEGMMLSLFVMMSVTIL, and IVLLVFAACEAALGLSLLVMV.

This sequence belongs to the complex I subunit 4L family. In terms of assembly, core subunit of respiratory chain NADH dehydrogenase (Complex I) which is composed of 45 different subunits.

It localises to the mitochondrion inner membrane. It catalyses the reaction a ubiquinone + NADH + 5 H(+)(in) = a ubiquinol + NAD(+) + 4 H(+)(out). Functionally, core subunit of the mitochondrial membrane respiratory chain NADH dehydrogenase (Complex I) which catalyzes electron transfer from NADH through the respiratory chain, using ubiquinone as an electron acceptor. Part of the enzyme membrane arm which is embedded in the lipid bilayer and involved in proton translocation. This Vulpes vulpes (Red fox) protein is NADH-ubiquinone oxidoreductase chain 4L (MT-ND4L).